The sequence spans 178 residues: Ribulose bisphosphate carboxylase small subunit, chloroplastic (178 aa).

The transit peptide at methionine 1–arginine 55 directs the protein to the chloroplast.

It belongs to the RuBisCO small chain family. As to quaternary structure, heterohexadecamer of 8 large and 8 small subunits.

It localises to the plastid. The protein resides in the chloroplast. RuBisCO catalyzes two reactions: the carboxylation of D-ribulose 1,5-bisphosphate, the primary event in carbon dioxide fixation, as well as the oxidative fragmentation of the pentose substrate. Both reactions occur simultaneously and in competition at the same active site. Although the small subunit is not catalytic it is essential for maximal activity. The chain is Ribulose bisphosphate carboxylase small subunit, chloroplastic from Zantedeschia aethiopica (White calla lily).